A 523-amino-acid chain; its full sequence is MSAPHSALQAELDAAQSPYLAFRGIGKSFPGVLALDDISFTCQAGQIHALMGENGAGKSTLLKILSGNYTPTQGEIHIKGKAVNFTNTTDALDAGVAIIYQELHLVPEMTVAENIYLGQLPTKMGMVDRKLLRYESRIQLSHLGLDIDPDTPLKYLSIGQWQMVEIAKALARNAKIIAFDEPTSSLSAREIEQLFRVIRELRAEGRVILYVSHRMEEIFALSDAITVFKDGRYVRTFDDMTQVNNASLVQAMVGRNLGDIYGYQPREIGSERLTLQAVKAIGVASPISLTVHQGEIVGLFGLVGAGRSELLKGLFGDTKLTSGKLLLDGQPLTIRSPIDAISAGIMLCPEDRKADGIIPVHSVQDNINISARRKTLTAGCLINNRWEADNALLRIQSLNIKTPGPQQLIMNLSGGNQQKAILGRWLSEDMKVILLDEPTRGIDVGAKHEIYNVIYQLAKQGIAVLFASSDLPEVLGLADRIVVMREGAISGELDHEYATEEQALSLAMLRTPNIATNTASAVA.

ABC transporter domains lie at 20-255 (LAFR…MVGR) and 268-511 (IGSE…MLRT). 52-59 (GENGAGKS) contacts ATP.

Belongs to the ABC transporter superfamily. Arabinose importer (TC 3.A.1.2.2) family. As to quaternary structure, the complex is composed of two ATP-binding proteins (AraG), two transmembrane proteins (AraH) and a solute-binding protein (AraF).

The protein resides in the cell inner membrane. The enzyme catalyses L-arabinose(out) + ATP + H2O = L-arabinose(in) + ADP + phosphate + H(+). Part of the ABC transporter complex AraFGH involved in arabinose import. Responsible for energy coupling to the transport system. In Yersinia pestis bv. Antiqua (strain Antiqua), this protein is Arabinose import ATP-binding protein AraG.